Here is a 252-residue protein sequence, read N- to C-terminus: 3-dehydroquinate dehydratase (252 aa).

3-dehydroquinate is bound by residues Ser-21, 46–48 (EWR), and Arg-82. The active-site Proton donor/acceptor is His-143. The active-site Schiff-base intermediate with substrate is Lys-170. The 3-dehydroquinate site is built by Arg-213, Ser-232, and Gln-236.

It belongs to the type-I 3-dehydroquinase family. Homodimer.

The enzyme catalyses 3-dehydroquinate = 3-dehydroshikimate + H2O. It functions in the pathway metabolic intermediate biosynthesis; chorismate biosynthesis; chorismate from D-erythrose 4-phosphate and phosphoenolpyruvate: step 3/7. Functionally, involved in the third step of the chorismate pathway, which leads to the biosynthesis of aromatic amino acids. Catalyzes the cis-dehydration of 3-dehydroquinate (DHQ) and introduces the first double bond of the aromatic ring to yield 3-dehydroshikimate. The polypeptide is 3-dehydroquinate dehydratase (Shigella dysenteriae serotype 1 (strain Sd197)).